Consider the following 443-residue polypeptide: Exodeoxyribonuclease 7 large subunit (443 aa).

Belongs to the XseA family. Heterooligomer composed of large and small subunits.

The protein resides in the cytoplasm. It catalyses the reaction Exonucleolytic cleavage in either 5'- to 3'- or 3'- to 5'-direction to yield nucleoside 5'-phosphates.. Its function is as follows. Bidirectionally degrades single-stranded DNA into large acid-insoluble oligonucleotides, which are then degraded further into small acid-soluble oligonucleotides. This Vibrio vulnificus (strain CMCP6) protein is Exodeoxyribonuclease 7 large subunit.